Here is a 67-residue protein sequence, read N- to C-terminus: Preprofallaxidin-1 (67 aa).

The signal sequence occupies residues 1–22 (MASLKKSLFLVLFLGMVSLSIC). A propeptide spanning residues 23 to 46 (DKEKREGENEEEEEEHEEESEEKR) is cleaved from the precursor. The interval 24–46 (KEKREGENEEEEEEHEEESEEKR) is disordered. Residues 30-42 (ENEEEEEEHEEES) show a composition bias toward acidic residues.

In terms of tissue distribution, expressed by the skin glands.

Its subcellular location is the secreted. In terms of biological role, fallaxidin-4.1 shows antibacterial activity against the Gram-positive bacteria L.lactis (MIC=12 uM), M.luteus (MIC=100 uM), S.epidermidis (MIC=100 uM) and S.uberis (MIC=50 uM). No antibacterial activity against the Gram-positive bacteria B.cereus, E.faecalis, L.innocua, S.aureus, or the Gram-negative bacteria E.cloacae and E.coli. Inhibits the formation of NO by neuronal nitric oxide synthase with an IC(50) of 13.3 uM. The sequence is that of Preprofallaxidin-1 from Litoria fallax (Eastern dwarf tree frog).